The primary structure comprises 88 residues: Small ribosomal subunit protein bS16c (88 aa).

This sequence belongs to the bacterial ribosomal protein bS16 family.

The protein localises to the plastid. It is found in the chloroplast. The chain is Small ribosomal subunit protein bS16c from Solanum bulbocastanum (Wild potato).